The chain runs to 332 residues: Putative potassium channel regulatory protein sup-10 (332 aa).

Residues 1–18 form the signal peptide; sequence MRYAVFIFLIVLIDLIYC. The Extracellular segment spans residues 19-301; it reads WNSKRSFFIP…EISERNKRPA (283 aa). 3 N-linked (GlcNAc...) asparagine glycosylation sites follow: Asn-61, Asn-107, and Asn-166. A helical membrane pass occupies residues 302-322; it reads FVLVGLTGGIAVIILAFSIFW. Topologically, residues 323–332 are cytoplasmic; it reads GLNGSGFNKD.

May form a complex with sup-9 and unc-93 where sup-10 and unc-93 act as regulatory subunits of the two pore potassium channel sup-9. Sup-10 may regulate sup-9 via sup-18. Low levels in body-wall muscles, eight vulval muscles, intestinal muscles and anal depressor muscle.

The protein localises to the membrane. In terms of biological role, may contribute to coordination of muscle contraction as regulatory subunit of a nonessential potassium channel complex. The protein is Putative potassium channel regulatory protein sup-10 of Caenorhabditis elegans.